A 313-amino-acid polypeptide reads, in one-letter code: Ribosomal RNA small subunit methyltransferase H (313 aa).

Residues 35–37 (GGH), Asp55, Phe79, Asp100, and Gln107 contribute to the S-adenosyl-L-methionine site.

This sequence belongs to the methyltransferase superfamily. RsmH family.

It localises to the cytoplasm. The catalysed reaction is cytidine(1402) in 16S rRNA + S-adenosyl-L-methionine = N(4)-methylcytidine(1402) in 16S rRNA + S-adenosyl-L-homocysteine + H(+). In terms of biological role, specifically methylates the N4 position of cytidine in position 1402 (C1402) of 16S rRNA. The protein is Ribosomal RNA small subunit methyltransferase H of Burkholderia mallei (strain NCTC 10247).